The chain runs to 643 residues: Threonine--tRNA ligase (643 aa).

Residues 1-61 (MIEIFIEDLN…NQSGNLKFLK (61 aa)) form the TGS domain. The interval 246–539 (DHRKIGKDLE…LLEHYAGFLP (294 aa)) is catalytic. C339, H390, and H516 together coordinate Zn(2+).

It belongs to the class-II aminoacyl-tRNA synthetase family. In terms of assembly, homodimer. Requires Zn(2+) as cofactor.

The protein resides in the cytoplasm. It carries out the reaction tRNA(Thr) + L-threonine + ATP = L-threonyl-tRNA(Thr) + AMP + diphosphate + H(+). In terms of biological role, catalyzes the attachment of threonine to tRNA(Thr) in a two-step reaction: L-threonine is first activated by ATP to form Thr-AMP and then transferred to the acceptor end of tRNA(Thr). Also edits incorrectly charged L-seryl-tRNA(Thr). The protein is Threonine--tRNA ligase of Sulfurihydrogenibium sp. (strain YO3AOP1).